The following is a 668-amino-acid chain: DNA ligase (668 aa).

NAD(+)-binding positions include Asp37–Asp41, Ser86–Met87, and Glu116. Lys118 (N6-AMP-lysine intermediate) is an active-site residue. Positions 139, 173, 288, and 312 each coordinate NAD(+). Zn(2+)-binding residues include Cys406, Cys409, Cys424, and Cys429. Positions Ala591–Glu668 constitute a BRCT domain.

The protein belongs to the NAD-dependent DNA ligase family. LigA subfamily. The cofactor is Mg(2+). It depends on Mn(2+) as a cofactor.

It catalyses the reaction NAD(+) + (deoxyribonucleotide)n-3'-hydroxyl + 5'-phospho-(deoxyribonucleotide)m = (deoxyribonucleotide)n+m + AMP + beta-nicotinamide D-nucleotide.. In terms of biological role, DNA ligase that catalyzes the formation of phosphodiester linkages between 5'-phosphoryl and 3'-hydroxyl groups in double-stranded DNA using NAD as a coenzyme and as the energy source for the reaction. It is essential for DNA replication and repair of damaged DNA. The protein is DNA ligase of Lactobacillus helveticus (strain DPC 4571).